The following is a 98-amino-acid chain: uncharacterized protein (98 aa).

2 helical membrane-spanning segments follow: residues Leu8–Leu28 and Leu73–Leu93.

The protein localises to the membrane. This is an uncharacterized protein from Saccharomyces cerevisiae (strain ATCC 204508 / S288c) (Baker's yeast).